A 92-amino-acid chain; its full sequence is Cell division protein FtsB (92 aa).

At 1–3 (MRL) the chain is on the cytoplasmic side. Residues 4–21 (LILILLSVLVLFQHDFWF) traverse the membrane as a helical segment. Over 22–92 (GSNGFLDYRQ…VFYHIVKESK (71 aa)) the chain is Periplasmic. Positions 28 to 63 (DYRQNAEKIKENQAENEKLSQRNQRINAEIQGLTKG) form a coiled coil.

Belongs to the FtsB family. Part of a complex composed of FtsB, FtsL and FtsQ.

Its subcellular location is the cell inner membrane. Its function is as follows. Essential cell division protein. May link together the upstream cell division proteins, which are predominantly cytoplasmic, with the downstream cell division proteins, which are predominantly periplasmic. This chain is Cell division protein FtsB, found in Haemophilus influenzae (strain PittEE).